Consider the following 329-residue polypeptide: MSASPLKVAVTGAAGQIGYSLLFRLASGSLLGPDRPIELRLLEIEPALKALEGVVMELDDCAFPLLSGVEIGADPNKIFDGANLALLVGARPRGPGMERSDLLEANGAIFTAQGKALNEVAADDIRVGVTGNPANTNALIAMSNAPDIPRERFSALTRLDHNRAISQLAKKTGAKVTDIKKMTIWGNHSATQYPDIFHAEVKGKNAAEVVGDQNWIENDFIPTVAKRGAAIIDARGASSAASAASATTDAARDWLLGTPAGDWVSMAVISDGSYGVPEGLISSFPVTTKDGDWTIVQGLEIDEFSRSRIDKTTAELADERNAVTQLGLI.

Residue 12–18 coordinates NAD(+); that stretch reads GAAGQIG. Substrate is bound by residues Arg-93 and Arg-99. Residues Asn-106, Gln-113, and 130–132 each bind NAD(+); that span reads TGN. 2 residues coordinate substrate: Asn-132 and Arg-163. The Proton acceptor role is filled by His-188.

It belongs to the LDH/MDH superfamily. MDH type 2 family.

It catalyses the reaction (S)-malate + NAD(+) = oxaloacetate + NADH + H(+). Functionally, catalyzes the reversible oxidation of malate to oxaloacetate. In Mycolicibacterium paratuberculosis (strain ATCC BAA-968 / K-10) (Mycobacterium paratuberculosis), this protein is Malate dehydrogenase.